Here is a 428-residue protein sequence, read N- to C-terminus: Lysophosphatidic acid phosphatase type 6 (428 aa).

A mitochondrion-targeting transit peptide spans 1-32 (MITGVFSMRLWTPVGVLTSLAYCLHQRRVALA). The interval 58 to 168 (RHGARSPLKP…VFIRSTNIFR (111 aa)) is substrate binding. The active-site Nucleophile is histidine 59. Aspartate 335 functions as the Proton donor in the catalytic mechanism.

It belongs to the histidine acid phosphatase family. As to quaternary structure, monomer. As to expression, highly expressed in kidney, heart, small intestine, muscle, liver, prostate, testis, ovary and weakly expressed in thymus and colon.

It is found in the mitochondrion. It catalyses the reaction a phosphate monoester + H2O = an alcohol + phosphate. It carries out the reaction 1-(9Z-octadecenoyl)-sn-glycero-3-phosphate + H2O = 1-(9Z-octadecenoyl)-sn-glycerol + phosphate. Hydrolyzes lysophosphatidic acid (LPA) containing a medium length fatty acid chain to the corresponding monoacylglycerol. Has highest activity with lysophosphatidic acid containing myristate (C14:0), monounsaturated oleate (C18:1) or palmitate (C16:0), and lower activity with C18:0 and C6:0 lysophosphatidic acid. The chain is Lysophosphatidic acid phosphatase type 6 (ACP6) from Homo sapiens (Human).